The primary structure comprises 331 residues: Pseudouridylate synthase TRUB2, mitochondrial (331 aa).

The transit peptide at 1–10 directs the protein to the mitochondrion; sequence MGSAGLSRLH. The Nucleophile role is filled by aspartate 98. The segment at 296–331 is disordered; the sequence is KSLSPGLDTKQLPSPGWSWDSQGPSSTLGLERGAGQ. Polar residues predominate over residues 314 to 323; sequence WDSQGPSSTL.

Belongs to the pseudouridine synthase TruB family. Forms a regulatory protein-RNA complex, consisting of RCC1L, NGRN, RPUSD3, RPUSD4, TRUB2, FASTKD2 and 16S mt-rRNA.

It localises to the mitochondrion matrix. The enzyme catalyses a uridine in mRNA = a pseudouridine in mRNA. The catalysed reaction is uridine(55) in tRNA = pseudouridine(55) in tRNA. Its function is as follows. Minor enzyme contributing to the isomerization of uridine to pseudouridine (pseudouridylation) of specific mitochondrial mRNAs (mt-mRNAs) such as COXI and COXIII mt-mRNAs. As a component of a functional protein-RNA module, consisting of RCC1L, NGRN, RPUSD3, RPUSD4, TRUB2, FASTKD2 and 16S mitochondrial ribosomal RNA (16S mt-rRNA), controls 16S mt-rRNA abundance and is required for intra-mitochondrial translation. Also catalyzes pseudouridylation of some tRNAs, including synthesis of pseudouridine(55) from uracil-55, in the psi GC loop of a subset of tRNAs. This is Pseudouridylate synthase TRUB2, mitochondrial from Homo sapiens (Human).